The primary structure comprises 87 residues: Large ribosomal subunit protein bL27 (87 aa).

Residues M1–L21 form a disordered region.

Belongs to the bacterial ribosomal protein bL27 family.

The chain is Large ribosomal subunit protein bL27 from Paraburkholderia xenovorans (strain LB400).